We begin with the raw amino-acid sequence, 129 residues long: Small ribosomal subunit protein uS11 (129 aa).

It belongs to the universal ribosomal protein uS11 family. As to quaternary structure, part of the 30S ribosomal subunit. Interacts with proteins S7 and S18. Binds to IF-3.

Located on the platform of the 30S subunit, it bridges several disparate RNA helices of the 16S rRNA. Forms part of the Shine-Dalgarno cleft in the 70S ribosome. This chain is Small ribosomal subunit protein uS11, found in Pasteurella multocida (strain Pm70).